The primary structure comprises 421 residues: Fasciclin-like arabinogalactan protein ARB_02922 (421 aa).

Positions 1 to 17 (MLLYYILVALWATVTYA) are cleaved as a signal peptide. 2 consecutive FAS1 domains span residues 18–167 (KSFS…DRPL) and 169–296 (LPQS…SDVL). N-linked (GlcNAc...) asparagine glycosylation is found at Asn52, Asn75, Asn80, Asn120, Asn145, Asn181, Asn223, and Asn300. The disordered stretch occupies residues 300-401 (NDTAKPVPNA…NTPQPGAAAT (102 aa)). Gly residues-rich tracts occupy residues 344-356 (TSGG…GGGE) and 372-387 (SGGG…GGPG). The segment covering 388–401 (PTATNTPQPGAAAT) has biased composition (low complexity). Gly397 is lipidated: GPI-anchor amidated glycine. Positions 398 to 421 (AAATERAKAGLAAVVGLGVVLINA) are cleaved as a propeptide — removed in mature form.

The protein belongs to the fasciclin-like AGP family.

Its subcellular location is the cell membrane. Functionally, may be a cell surface adhesion protein. This is Fasciclin-like arabinogalactan protein ARB_02922 from Arthroderma benhamiae (strain ATCC MYA-4681 / CBS 112371) (Trichophyton mentagrophytes).